We begin with the raw amino-acid sequence, 514 residues long: Maturase K (514 aa).

This sequence belongs to the intron maturase 2 family. MatK subfamily.

It is found in the plastid. It localises to the chloroplast. Its function is as follows. Usually encoded in the trnK tRNA gene intron. Probably assists in splicing its own and other chloroplast group II introns. The chain is Maturase K from Erythronium grandiflorum (Yellow avalanche-lily).